A 96-amino-acid polypeptide reads, in one-letter code: UPF0213 protein BCE33L0031 (96 aa).

In terms of domain architecture, GIY-YIG spans 4–79; the sequence is NKHCFYVVEC…KQLNRKQKEE (76 aa).

The protein belongs to the UPF0213 family.

The polypeptide is UPF0213 protein BCE33L0031 (Bacillus cereus (strain ZK / E33L)).